The primary structure comprises 635 residues: Cerevisin (635 aa).

Residues 1-19 (MKLENTLFTLGALGSISAA) form the signal peptide. The propeptide occupies 20-280 (LVIPNLENAA…VERDSIVEAT (261 aa)). Basic and acidic residues-rich tracts occupy residues 35 to 50 (INKE…VEFT), 74 to 85 (KGQDKESPEFNG), 94 to 109 (SAHE…HESS), and 126 to 136 (GCHENKVEEKK). A disordered region spans residues 35–155 (INKEDHHERP…KHHEKTLEKG (121 aa)). Residues 137 to 155 (MKGKKVKGKKHHEKTLEKG) are compositionally biased toward basic residues. The region spanning 182-278 (RYIIVFKRGA…DFVERDSIVE (97 aa)) is the Inhibitor I9 domain. One can recognise a Peptidase S8 domain in the interval 289 to 614 (PWGLARISHR…KQELNMDEFI (326 aa)). Catalysis depends on charge relay system residues Asp325 and His357. The cysteines at positions 460 and 491 are disulfide-linked. Catalysis depends on Ser519, which acts as the Charge relay system. Positions 575–635 (DTPNVLIYNG…RDILDKLNII (61 aa)) are excised as a propeptide. The N-linked (GlcNAc...) asparagine glycan is linked to Asn594.

Belongs to the peptidase S8 family. In terms of processing, activated by N- and C-terminal proteolytic cleavage. Protease B (PrB/PRB1) processing requires at least 4 cleavages. First, the signal peptide is removed from the 76 kDa preproprotease B by signal peptidase in the ER. Then, PrB removes its own Pro-region (in trans) at the N-terminus, producing a 39 kDa form before exiting the ER. In the Golgi complex, the C-terminal Post-region of the 40 kDa proprotease B undergoes protease A (PrA/PEP4)-mediated processing to a 37 kDa intermediate, which in turn is quickly processed again by PrB in trans to yield the 31 kDa mature PrB. Glycosylated. Preproprotease B is a 76 kDa unglycosylated precursor that enters the endoplasmic reticulum (ER), where it receives one Asn-linked and an undetermined number of non-Asn-linked carbohydrate side chains. In the Golgi complex, the 39 kDa form becomes 40 kDa, due to elaboration of the Asn-linked side chain. The ultimate processing step removes a peptide containing the Asn-linked chain. Mature PrB has only non-Asn-linked carbohydrates.

Its subcellular location is the vacuole. It catalyses the reaction Hydrolysis of proteins with broad specificity, and of Bz-Arg-OEt &gt; Ac-Tyr-OEt. Does not hydrolyze peptide amides.. Functionally, vacuolar proteinase B involved in protein degradation in the vacuole. Among other substrates, acts on carboxypeptidase Y (cpY/PRC1) to activate it by processing its Pro-peptide. Required for meiosis and spore formation, and for optimal survival in stationary phase. This is Cerevisin (PRB1) from Saccharomyces cerevisiae (strain ATCC 204508 / S288c) (Baker's yeast).